The chain runs to 656 residues: ATP-dependent zinc metalloprotease FtsH (656 aa).

The Cytoplasmic segment spans residues methionine 1–serine 10. A helical transmembrane segment spans residues phenylalanine 11 to glycine 31. The Extracellular segment spans residues alanine 32–glycine 116. The chain crosses the membrane as a helical span at residues leucine 117–phenylalanine 137. Residues methionine 138–alanine 656 are Cytoplasmic-facing. ATP is bound at residue glycine 209–threonine 216. Histidine 432 serves as a coordination point for Zn(2+). The active site involves glutamate 433. 2 residues coordinate Zn(2+): histidine 436 and aspartate 511. Positions phenylalanine 622 to glycine 632 are enriched in polar residues. Residues phenylalanine 622–alanine 656 are disordered.

In the central section; belongs to the AAA ATPase family. The protein in the C-terminal section; belongs to the peptidase M41 family. As to quaternary structure, homohexamer. Zn(2+) is required as a cofactor.

The protein localises to the cell membrane. In terms of biological role, acts as a processive, ATP-dependent zinc metallopeptidase for both cytoplasmic and membrane proteins. Plays a role in the quality control of integral membrane proteins. The chain is ATP-dependent zinc metalloprotease FtsH from Chloroflexus aggregans (strain MD-66 / DSM 9485).